A 525-amino-acid chain; its full sequence is UPF0288 protein MM_0912 (525 aa).

The protein belongs to the UPF0288 family.

This Methanosarcina mazei (strain ATCC BAA-159 / DSM 3647 / Goe1 / Go1 / JCM 11833 / OCM 88) (Methanosarcina frisia) protein is UPF0288 protein MM_0912.